Here is a 251-residue protein sequence, read N- to C-terminus: 2,3-bisphosphoglycerate-dependent phosphoglycerate mutase (251 aa).

Substrate is bound by residues 13–20, 26–27, R65, 92–95, K103, 119–120, and 186–187; these read RHGESEWN, TG, ERHY, RR, and GN. The active-site Tele-phosphohistidine intermediate is H14. The Proton donor/acceptor role is filled by E92.

The protein belongs to the phosphoglycerate mutase family. BPG-dependent PGAM subfamily.

It catalyses the reaction (2R)-2-phosphoglycerate = (2R)-3-phosphoglycerate. The protein operates within carbohydrate degradation; glycolysis; pyruvate from D-glyceraldehyde 3-phosphate: step 3/5. Catalyzes the interconversion of 2-phosphoglycerate and 3-phosphoglycerate. This Rhodococcus jostii (strain RHA1) protein is 2,3-bisphosphoglycerate-dependent phosphoglycerate mutase.